The following is a 166-amino-acid chain: Myosin regulatory light chain 2, ventricular/cardiac muscle isoform (166 aa).

A2 is modified (n,N,N-trimethylalanine). S14 and S15 each carry phosphoserine; by MLCK. S19 carries the phosphoserine modification. EF-hand domains lie at 24 to 59, 94 to 129, and 130 to 165; these read TQIQEFKEAFTIMDQNRDGFIDKNDLRDTFAALGRV, DPEETILNAFKVFDPEGKGSLKADYVREMLTTQAER, and FSKEEIDQMFAAFPPDVTGNLDYKNLVHIITHGEEK. Residues D37, N39, D41, and D48 each coordinate Ca(2+). Position 52 is a phosphothreonine (T52).

As to quaternary structure, myosin is a hexamer of 2 heavy chains and 4 light chains. Interacts with MYOC. N-terminus is methylated by METTL11A/NTM1. Post-translationally, phosphorylated by MYLK3 and MYLK2; promotes cardiac muscle contraction and function. Dephosphorylated by PPP1CB complexed to PPP1R12B. The phosphorylated form in adult is expressed as gradients across the heart from endocardium (low phosphorylation) to epicardium (high phosphorylation); regulates cardiac torsion and workload distribution. As to expression, abundantly expressed in both cardiac and slow skeletal muscle. In the adult heart, the phosphorylated form is highly expressed in epicardium and weakly in endocardium.

It localises to the cytoplasm. The protein localises to the myofibril. It is found in the sarcomere. The protein resides in the a band. Contractile protein that plays a role in heart development and function. Following phosphorylation, plays a role in cross-bridge cycling kinetics and cardiac muscle contraction by increasing myosin lever arm stiffness and promoting myosin head diffusion; as a consequence of the increase in maximum contraction force and calcium sensitivity of contraction force. These events altogether slow down myosin kinetics and prolong duty cycle resulting in accumulated myosins being cooperatively recruited to actin binding sites to sustain thin filament activation as a means to fine-tune myofilament calcium sensitivity to force. During cardiogenesis plays an early role in cardiac contractility by promoting cardiac myofibril assembly. The chain is Myosin regulatory light chain 2, ventricular/cardiac muscle isoform from Mus musculus (Mouse).